The sequence spans 260 residues: Flagellar basal-body rod protein FlgG (260 aa).

It belongs to the flagella basal body rod proteins family. In terms of assembly, the basal body constitutes a major portion of the flagellar organelle and consists of four rings (L,P,S, and M) mounted on a central rod. The rod consists of about 26 subunits of FlgG in the distal portion, and FlgB, FlgC and FlgF are thought to build up the proximal portion of the rod with about 6 subunits each.

It is found in the bacterial flagellum basal body. This Escherichia coli O157:H7 protein is Flagellar basal-body rod protein FlgG (flgG).